The following is a 434-amino-acid chain: Trigger factor (434 aa).

In terms of domain architecture, PPIase FKBP-type spans 160-245 (GDKVKMNFVG…LTEVQAAQLP (86 aa)).

The protein belongs to the FKBP-type PPIase family. Tig subfamily.

It localises to the cytoplasm. It catalyses the reaction [protein]-peptidylproline (omega=180) = [protein]-peptidylproline (omega=0). Its function is as follows. Involved in protein export. Acts as a chaperone by maintaining the newly synthesized protein in an open conformation. Functions as a peptidyl-prolyl cis-trans isomerase. The chain is Trigger factor from Shewanella denitrificans (strain OS217 / ATCC BAA-1090 / DSM 15013).